The following is a 234-amino-acid chain: Probable transcriptional regulatory protein PSPTO_3162 (234 aa).

Belongs to the TACO1 family.

Its subcellular location is the cytoplasm. The chain is Probable transcriptional regulatory protein PSPTO_3162 from Pseudomonas syringae pv. tomato (strain ATCC BAA-871 / DC3000).